A 2531-amino-acid polypeptide reads, in one-letter code: Probable polyketide synthase 26 (2531 aa).

One can recognise a Ketosynthase family 3 (KS3) domain in the interval 10 to 433 (QEDIAIIGFR…GSNCCLVLTE (424 aa)). Active-site for beta-ketoacyl synthase activity residues include Cys-174, His-316, and His-356. Residues 620–653 (GINPSFIVGHSLGELPMAFCSGMIDFDTVCYLLY) are acyl/malonyl transferase. The active-site For acyl/malonyl transferase activity is Ser-630. Residues 915–1036 (MDTLGFSNEK…ANYHLSHRDD (122 aa)) form an N-terminal hotdog fold region. One can recognise a PKS/mFAS DH domain in the interval 915 to 1206 (MDTLGFSNEK…LKSLIPLKDP (292 aa)). Residue His-948 is the Proton acceptor; for dehydratase activity of the active site. The interval 1055 to 1206 (NLTKLSKNQF…LKSLIPLKDP (152 aa)) is C-terminal hotdog fold. The Proton donor; for dehydratase activity role is filled by Asp-1117. Residues 2431–2509 (ASENPVKDLL…DNIKILTDSY (79 aa)) form the Carrier domain. Ser-2468 bears the O-(pantetheine 4'-phosphoryl)serine mark.

The cofactor is pantetheine 4'-phosphate.

Its function is as follows. Probable polyketide synthase. The sequence is that of Probable polyketide synthase 26 (pks26) from Dictyostelium discoideum (Social amoeba).